The following is a 409-amino-acid chain: Casein kinase I isoform delta-B (409 aa).

The Protein kinase domain maps to 9 to 277; it reads YRLGRKIGSG…YLRQLFRNLF (269 aa). Residues 15–23 and Lys-38 contribute to the ATP site; that span reads IGSGSFGDI. Asp-128 serves as the catalytic Proton acceptor. Residues 300–315 show a composition bias toward basic and acidic residues; it reads TAEEADRERRERDERM. A disordered region spans residues 300–409; sequence TAEEADRERR…NSIPFDHHGK (110 aa). The autoinhibitory stretch occupies residues 317 to 341; that stretch reads HSRNPAARGIPAASGRPRPTQDGAP. Composition is skewed to polar residues over residues 346 to 358 and 380 to 402; these read TPTS…SSPR and NVSS…QNSI.

The protein belongs to the protein kinase superfamily. Monomer. Interacts with per1 and per2. Component of the circadian core oscillator. Autophosphorylated on serine and threonine residues.

The protein localises to the cytoplasm. Its subcellular location is the nucleus. The catalysed reaction is L-seryl-[protein] + ATP = O-phospho-L-seryl-[protein] + ADP + H(+). It catalyses the reaction L-threonyl-[protein] + ATP = O-phospho-L-threonyl-[protein] + ADP + H(+). Exhibits substrate-dependent heparin activation. Its function is as follows. Casein kinases are operationally defined by their preferential utilization of acidic proteins such as caseins as substrates. Central component of the circadian clock. May act as a negative regulator of circadian rhythmicity by phosphorylating per1 and per2, which may lead to their degradation. Participates in wnt signaling. The sequence is that of Casein kinase I isoform delta-B (csnk1db) from Danio rerio (Zebrafish).